A 663-amino-acid chain; its full sequence is Protein-arginine deiminase type-4 (663 aa).

The Ca(2+) site is built by Asn153, Asp155, Asp157, Asp165, Asp168, Glu170, Asp176, and Asp179. 3 positions are modified to citrulline: Arg205, Arg212, and Arg218. Gln349 contacts Ca(2+). Residue Asp350 is part of the active site. Glu351, Glu353, Asp369, and Ser370 together coordinate Ca(2+). Arg372 carries the post-translational modification Citrulline. Asn373 is a Ca(2+) binding site. A citrulline mark is found at Arg374 and Arg383. Position 374 (Arg374) interacts with substrate. Asp388, Phe407, Leu410, and Glu411 together coordinate Ca(2+). Catalysis depends on residues His471 and Asp473. Arg639 is a substrate binding site. The active site involves Cys645.

Belongs to the protein arginine deiminase family. Requires Ca(2+) as cofactor. Post-translationally, autocitrullination at Arg-372 and Arg-374 inactivates the enzyme. As to expression, expressed in eosinophils and neutrophils, not expressed in peripheral monocytes or lymphocytes.

Its subcellular location is the cytoplasm. The protein localises to the nucleus. It is found in the cytoplasmic granule. It carries out the reaction L-arginyl-[protein] + H2O = L-citrullyl-[protein] + NH4(+). With respect to regulation, strongly Inhibited by F-amidine and N-alpha-benzoyl-N5-(2-chloro-1-iminoethyl)-L-ornithine amide (Cl-amidine). These inhibitors are however not specific to PADI4 and also inhibit other members of the family. Incorporation of a carboxylate ortho to the backbone amide of Cl-amidine results in inhibitors with increased specificity for PADI4: N-alpha-(2-carboxyl)benzoyl-N(5)-(2-fluoro-1-iminoethyl)-L-ornithine amide (o-F-amidine) and N-alpha-(2-carboxyl)benzoyl-N(5)-(2-chloro-1-iminoethyl)-L-ornithine amide (o-Cl-amidine). Strongly and specifically inhibited by Thr-Asp-F-amidine (TDFA); other members of the family are not inhibited. Catalyzes the citrullination/deimination of arginine residues of proteins such as histones, thereby playing a key role in histone code and regulation of stem cell maintenance. Citrullinates histone H1 at 'Arg-54' (to form H1R54ci), histone H3 at 'Arg-2', 'Arg-8', 'Arg-17' and/or 'Arg-26' (to form H3R2ci, H3R8ci, H3R17ci, H3R26ci, respectively) and histone H4 at 'Arg-3' (to form H4R3ci). Acts as a key regulator of stem cell maintenance by mediating citrullination of histone H1: citrullination of 'Arg-54' of histone H1 (H1R54ci) results in H1 displacement from chromatin and global chromatin decondensation, thereby promoting pluripotency and stem cell maintenance. Promotes profound chromatin decondensation during the innate immune response to infection in neutrophils by mediating formation of H1R54ci. Required for the formation of neutrophil extracellular traps (NETs); NETs are mainly composed of DNA fibers and are released by neutrophils to bind pathogens during inflammation. Citrullination of histone H3 prevents their methylation by CARM1 and HRMT1L2/PRMT1 and represses transcription. Citrullinates EP300/P300 at 'Arg-2142', which favors its interaction with NCOA2/GRIP1. The sequence is that of Protein-arginine deiminase type-4 (PADI4) from Homo sapiens (Human).